The primary structure comprises 604 residues: Membrane protein insertase YidC (604 aa).

The chain crosses the membrane as a helical span at residues 8–28 (LYLAIGLSLLVLIGWNYFFAG). Positions 42 to 84 (EQQAQTQTTSDTTARSDLNVPGQRSLPGESPQTQLSRPEALAA) are disordered. A compositionally biased stretch (low complexity) spans 43-58 (QQAQTQTTSDTTARSD). 5 helical membrane passes run 349–369 (FDLLIDWGYFYFITRPMFWIL), 375–395 (VVGNFGVAILCITVLVKAVFF), 449–469 (LPMLIQIPVFFALYKVLFVTI), 507–527 (MIGHFLAIGIWPLIMGVSMFF), and 546–566 (WMPVIFTFMLGTFPSGLVIYW).

The protein belongs to the OXA1/ALB3/YidC family. Type 1 subfamily. Interacts with the Sec translocase complex via SecD. Specifically interacts with transmembrane segments of nascent integral membrane proteins during membrane integration.

The protein localises to the cell inner membrane. In terms of biological role, required for the insertion and/or proper folding and/or complex formation of integral membrane proteins into the membrane. Involved in integration of membrane proteins that insert both dependently and independently of the Sec translocase complex, as well as at least some lipoproteins. Aids folding of multispanning membrane proteins. The polypeptide is Membrane protein insertase YidC (Beijerinckia indica subsp. indica (strain ATCC 9039 / DSM 1715 / NCIMB 8712)).